We begin with the raw amino-acid sequence, 130 residues long: Hydrogenase maturation factor HypA (130 aa).

Histidine 2 is a binding site for Ni(2+). Zn(2+)-binding residues include cysteine 74, cysteine 77, cysteine 90, and cysteine 93.

This sequence belongs to the HypA/HybF family.

Functionally, involved in the maturation of [NiFe] hydrogenases. Required for nickel insertion into the metal center of the hydrogenase. The chain is Hydrogenase maturation factor HypA from Desulfatibacillum aliphaticivorans.